A 159-amino-acid chain; its full sequence is Regulatory protein RecX (159 aa).

Belongs to the RecX family.

It is found in the cytoplasm. Modulates RecA activity. The sequence is that of Regulatory protein RecX from Ralstonia pickettii (strain 12J).